Consider the following 508-residue polypeptide: Cyclin-A1-1 (508 aa).

Positions Met1–Val28 are enriched in low complexity. 2 disordered regions span residues Met1–Ala40 and Val82–Leu125. The span at Gly29–Ala39 shows a compositional bias: gly residues. Low complexity predominate over residues Ala98 to Ala111.

This sequence belongs to the cyclin family. Cyclin AB subfamily. In terms of tissue distribution, expressed in the dividing region of the root cap and root apex. Expressed in the intercalary meristem of internodes and in adventitious roots under submergence conditions.

Its function is as follows. Involved in the control of the cell cycle at the G2/M (mitosis) transition. The protein is Cyclin-A1-1 (CYCA1-1) of Oryza sativa subsp. japonica (Rice).